Here is a 178-residue protein sequence, read N- to C-terminus: ATP synthase subunit delta (178 aa).

It belongs to the ATPase delta chain family. In terms of assembly, F-type ATPases have 2 components, F(1) - the catalytic core - and F(0) - the membrane proton channel. F(1) has five subunits: alpha(3), beta(3), gamma(1), delta(1), epsilon(1). F(0) has three main subunits: a(1), b(2) and c(10-14). The alpha and beta chains form an alternating ring which encloses part of the gamma chain. F(1) is attached to F(0) by a central stalk formed by the gamma and epsilon chains, while a peripheral stalk is formed by the delta and b chains.

The protein localises to the cell inner membrane. Its function is as follows. F(1)F(0) ATP synthase produces ATP from ADP in the presence of a proton or sodium gradient. F-type ATPases consist of two structural domains, F(1) containing the extramembraneous catalytic core and F(0) containing the membrane proton channel, linked together by a central stalk and a peripheral stalk. During catalysis, ATP synthesis in the catalytic domain of F(1) is coupled via a rotary mechanism of the central stalk subunits to proton translocation. In terms of biological role, this protein is part of the stalk that links CF(0) to CF(1). It either transmits conformational changes from CF(0) to CF(1) or is implicated in proton conduction. The chain is ATP synthase subunit delta from Nitrosospira multiformis (strain ATCC 25196 / NCIMB 11849 / C 71).